The primary structure comprises 1314 residues: Ubinuclein-2 (1314 aa).

A disordered region spans residues 1–113 (MAEPRRVAFI…PPPRPPKETV (113 aa)). Ser-13 carries the post-translational modification Phosphoserine. 2 stretches are compositionally biased toward basic and acidic residues: residues 16 to 31 (RRREADFAGAEREPPR) and 55 to 67 (ARDKPLPQREVSR). Over residues 81 to 96 (PEPPPPPLPLQTPPPR) the composition is skewed to pro residues. Thr-229 is subject to Phosphothreonine. Ser-236 is subject to Phosphoserine. A disordered region spans residues 236–288 (SDTEEDDFTDNQKHKPPKVPKIKEDDIEVKKRKRKEEGEKEKKPRKKVPKQLG). Residue Thr-238 is modified to Phosphothreonine. Residue Lys-258 forms a Glycyl lysine isopeptide (Lys-Gly) (interchain with G-Cter in SUMO2) linkage. Phosphoserine is present on Ser-297. 9 disordered regions span residues 322–345 (DALKKESTPKVPVTPSSSSLPKPP), 400–424 (ATSDGSPLSESGGENGNTTHPTFPS), 559–584 (LQADEEREKNGSDDDDDEKPGKRVIG), 657–709 (LTSA…ASAS), 785–818 (ATPKKLDSTQTAHSSSLIAGHTGPVPKKPQDLAH), 849–893 (GLQR…SLTQ), 948–975 (YRLPLSTPSPGNGSQGPHPLVSRTAPST), 1003–1185 (ASPK…GSSV), and 1288–1314 (PLPAHLQQAFNDGGQSKGDTKLPRKPQ). Positions 330 to 341 (PKVPVTPSSSSL) are enriched in low complexity. Phosphoserine is present on residues Ser-402, Ser-405, and Ser-408. Residues 415-424 (GNTTHPTFPS) are compositionally biased toward polar residues. Basic and acidic residues-rich tracts occupy residues 560–570 (QADEEREKNGS) and 673–684 (KVKECSPKKDPK). Residue Ser-570 is modified to Phosphoserine. Over residues 685-709 (APASVVASGGGPSTSSSTSIVASAS) the composition is skewed to low complexity. A compositionally biased stretch (polar residues) spans 792-801 (STQTAHSSSL). A compositionally biased stretch (low complexity) spans 849-879 (GLQRSSQIHASSSSQTHVSSSQAQAAASSHA). Over residues 883–893 (SEAQDASSLTQ) the composition is skewed to polar residues. The segment covering 1003 to 1013 (ASPKLAASPKP) has biased composition (low complexity). Over residues 1014 to 1028 (ATSPKPLPSPKPSVS) the composition is skewed to pro residues. The segment covering 1029–1040 (PKPSLSAKPSIS) has biased composition (low complexity). Lys-1036 carries the post-translational modification N6-acetyllysine. Composition is skewed to polar residues over residues 1057–1132 (PSSS…NSLS) and 1142–1153 (RGSNLNSSGANR). Residue Ser-1091 is modified to Phosphoserine. Lys-1116 bears the N6-acetyllysine mark. Positions 1305–1314 (GDTKLPRKPQ) are enriched in basic and acidic residues.

It belongs to the ubinuclein family.

The chain is Ubinuclein-2 (Ubn2) from Mus musculus (Mouse).